A 216-amino-acid polypeptide reads, in one-letter code: Phosphatidylserine decarboxylase proenzyme (216 aa).

S183 serves as the catalytic Schiff-base intermediate with substrate; via pyruvic acid. Position 183 is a pyruvic acid (Ser); by autocatalysis (S183).

Belongs to the phosphatidylserine decarboxylase family. PSD-A subfamily. Heterodimer of a large membrane-associated beta subunit and a small pyruvoyl-containing alpha subunit. Pyruvate serves as cofactor. In terms of processing, is synthesized initially as an inactive proenzyme. Formation of the active enzyme involves a self-maturation process in which the active site pyruvoyl group is generated from an internal serine residue via an autocatalytic post-translational modification. Two non-identical subunits are generated from the proenzyme in this reaction, and the pyruvate is formed at the N-terminus of the alpha chain, which is derived from the carboxyl end of the proenzyme. The post-translation cleavage follows an unusual pathway, termed non-hydrolytic serinolysis, in which the side chain hydroxyl group of the serine supplies its oxygen atom to form the C-terminus of the beta chain, while the remainder of the serine residue undergoes an oxidative deamination to produce ammonia and the pyruvoyl prosthetic group on the alpha chain.

The protein localises to the cell membrane. It carries out the reaction a 1,2-diacyl-sn-glycero-3-phospho-L-serine + H(+) = a 1,2-diacyl-sn-glycero-3-phosphoethanolamine + CO2. It functions in the pathway phospholipid metabolism; phosphatidylethanolamine biosynthesis; phosphatidylethanolamine from CDP-diacylglycerol: step 2/2. Catalyzes the formation of phosphatidylethanolamine (PtdEtn) from phosphatidylserine (PtdSer). This chain is Phosphatidylserine decarboxylase proenzyme, found in Cupriavidus taiwanensis (strain DSM 17343 / BCRC 17206 / CCUG 44338 / CIP 107171 / LMG 19424 / R1) (Ralstonia taiwanensis (strain LMG 19424)).